A 325-amino-acid chain; its full sequence is GMP reductase (325 aa).

Cysteine 174 functions as the Thioimidate intermediate in the catalytic mechanism. 203 to 226 (LIADGGIRTHGDIAKSIRFGATMV) provides a ligand contact to NADP(+).

This sequence belongs to the IMPDH/GMPR family. GuaC type 2 subfamily.

The catalysed reaction is IMP + NH4(+) + NADP(+) = GMP + NADPH + 2 H(+). In terms of biological role, catalyzes the irreversible NADPH-dependent deamination of GMP to IMP. It functions in the conversion of nucleobase, nucleoside and nucleotide derivatives of G to A nucleotides, and in maintaining the intracellular balance of A and G nucleotides. This chain is GMP reductase, found in Pediococcus pentosaceus (strain ATCC 25745 / CCUG 21536 / LMG 10740 / 183-1w).